The chain runs to 398 residues: Cysteine protease ATG4A (398 aa).

Residue Cys-77 is the Nucleophile of the active site. Residues Asp-279 and His-281 contribute to the active site. Residues 393–396 (FEIL) carry the LIR motif.

It belongs to the peptidase C54 family. In terms of assembly, interacts with ATG9A; the interaction is direct.

Its subcellular location is the cytoplasm. The enzyme catalyses [protein]-C-terminal L-amino acid-glycyl-phosphatidylethanolamide + H2O = [protein]-C-terminal L-amino acid-glycine + a 1,2-diacyl-sn-glycero-3-phosphoethanolamine. With respect to regulation, inhibited by N-ethylmaleimide. Redox-regulated during autophagy since reducing conditions activate ATG4A whereas an oxidizing environment such as the presence of H(2)O(2) inhibits its activity. Cysteine protease that plays a key role in autophagy by mediating both proteolytic activation and delipidation of ATG8 family proteins. The protease activity is required for proteolytic activation of ATG8 family proteins: cleaves the C-terminal amino acid of ATG8 proteins to reveal a C-terminal glycine. Exposure of the glycine at the C-terminus is essential for ATG8 proteins conjugation to phosphatidylethanolamine (PE) and insertion to membranes, which is necessary for autophagy. Preferred substrate is GABARAPL2 followed by MAP1LC3A and GABARAP. Protease activity is also required to counteract formation of high-molecular weight conjugates of ATG8 proteins (ATG8ylation): acts as a deubiquitinating-like enzyme that removes ATG8 conjugated to other proteins, such as ATG3. In addition to the protease activity, also mediates delipidation of ATG8 family proteins. Catalyzes delipidation of PE-conjugated forms of ATG8 proteins during macroautophagy. Compared to ATG4B, the major protein for proteolytic activation of ATG8 proteins, shows weaker ability to cleave the C-terminal amino acid of ATG8 proteins, while it displays stronger delipidation activity. Involved in phagophore growth during mitophagy independently of its protease activity and of ATG8 proteins: acts by regulating ATG9A trafficking to mitochondria and promoting phagophore-endoplasmic reticulum contacts during the lipid transfer phase of mitophagy. The chain is Cysteine protease ATG4A from Pongo abelii (Sumatran orangutan).